Reading from the N-terminus, the 447-residue chain is MSVLLFGVSHRSAPVSVLEQLSTDESDQAKIVDQVLQSSLVTEAMVLSTCNRVEVYAVVDAFHGGLSVIGQVLAEHCGMSLNDLTKYAYVRYAEAAVEHLFAVASGLDSAVIGEQQVLGQVRRAYTSAEANHTVGRTLHELSQRALSVGKRVHSETGIDAAGASVVSVALDIAEAKLGSLAGRTAVVIGAGSMGALSAKHLVRAGIERVHVVNRSLPRARRLAQSLLDQGVTADAHTLDDIAHALADADVVITSTGAVRPVVSLADAHRGLTGRPEHRRLVICDLGMPRDVEPAIAGLPGVNVIDMERIQREPSARAAASDADAARSIVAAEVANYLAGQRMAEVTPTVTALRQRAADVVEAELLRLDNRLPELDAAHRAEVAKTVRRVVDKLLHAPTVRVKQLASAPGGDSYAEALRELFELDQQAVDAVAAGELPLLPIELDKSE.

Substrate contacts are provided by residues threonine 49–arginine 52, serine 109, glutamate 114–glutamine 116, and glutamine 120. The active-site Nucleophile is the cysteine 50. An NADP(+)-binding site is contributed by glycine 189 to glycine 194.

The protein belongs to the glutamyl-tRNA reductase family. Homodimer.

It catalyses the reaction (S)-4-amino-5-oxopentanoate + tRNA(Glu) + NADP(+) = L-glutamyl-tRNA(Glu) + NADPH + H(+). Its pathway is porphyrin-containing compound metabolism; protoporphyrin-IX biosynthesis; 5-aminolevulinate from L-glutamyl-tRNA(Glu): step 1/2. Catalyzes the NADPH-dependent reduction of glutamyl-tRNA(Glu) to glutamate 1-semialdehyde (GSA). This Mycobacterium sp. (strain JLS) protein is Glutamyl-tRNA reductase.